The sequence spans 155 residues: Endoribonuclease YbeY (155 aa).

The Zn(2+) site is built by H120, H124, and H130.

The protein belongs to the endoribonuclease YbeY family. Requires Zn(2+) as cofactor.

The protein resides in the cytoplasm. Single strand-specific metallo-endoribonuclease involved in late-stage 70S ribosome quality control and in maturation of the 3' terminus of the 16S rRNA. The polypeptide is Endoribonuclease YbeY (Staphylococcus epidermidis (strain ATCC 12228 / FDA PCI 1200)).